The following is a 425-amino-acid chain: Tyrosine--tRNA ligase (425 aa).

Position 37 (tyrosine 37) interacts with L-tyrosine. The 'HIGH' region motif lies at 42–51 (PTADSLHLGH). L-tyrosine-binding residues include tyrosine 175 and glutamine 179. Positions 235-239 (KFGKT) match the 'KMSKS' region motif. Lysine 238 serves as a coordination point for ATP. The S4 RNA-binding domain maps to 357–414 (ADLQQALVSAELVPSRGQARTMISSNAVTINGEKQADPEYTFSASDRLFDRYTLLRRG).

Belongs to the class-I aminoacyl-tRNA synthetase family. TyrS type 1 subfamily. Homodimer.

The protein resides in the cytoplasm. The enzyme catalyses tRNA(Tyr) + L-tyrosine + ATP = L-tyrosyl-tRNA(Tyr) + AMP + diphosphate + H(+). Functionally, catalyzes the attachment of tyrosine to tRNA(Tyr) in a two-step reaction: tyrosine is first activated by ATP to form Tyr-AMP and then transferred to the acceptor end of tRNA(Tyr). The protein is Tyrosine--tRNA ligase of Pectobacterium carotovorum subsp. carotovorum (strain PC1).